The sequence spans 156 residues: Small ribosomal subunit protein uS7 (156 aa).

Belongs to the universal ribosomal protein uS7 family. Part of the 30S ribosomal subunit. Contacts proteins S9 and S11.

In terms of biological role, one of the primary rRNA binding proteins, it binds directly to 16S rRNA where it nucleates assembly of the head domain of the 30S subunit. Is located at the subunit interface close to the decoding center, probably blocks exit of the E-site tRNA. This is Small ribosomal subunit protein uS7 from Geotalea daltonii (strain DSM 22248 / JCM 15807 / FRC-32) (Geobacter daltonii).